Here is a 123-residue protein sequence, read N- to C-terminus: Small ribosomal subunit protein uS12c (123 aa).

The disordered stretch occupies residues 103-123 (AAGVKNRKQSRSKYGAKKPKE). Residues 107–123 (KNRKQSRSKYGAKKPKE) show a composition bias toward basic residues.

This sequence belongs to the universal ribosomal protein uS12 family. As to quaternary structure, part of the 30S ribosomal subunit.

It is found in the plastid. It localises to the chloroplast. Functionally, with S4 and S5 plays an important role in translational accuracy. Located at the interface of the 30S and 50S subunits. This chain is Small ribosomal subunit protein uS12c (rps12), found in Guillardia theta (Cryptophyte).